The chain runs to 30 residues: Rothein 3.4 (30 aa).

Leucine 30 is modified (leucine amide).

Belongs to the frog skin active peptide (FSAP) family. Rothein subfamily. As to expression, expressed by the skin dorsal glands.

The protein resides in the secreted. Functionally, lacks antimicrobial activity. Does not inhibit the formation of NO by neuronal nitric oxide. This Litoria rothii (Roth's tree frog) protein is Rothein 3.4.